The chain runs to 391 residues: Elongation factor Tu (391 aa).

The region spanning 10–201 (KPHVNIGTIG…AVDDYIPTPE (192 aa)) is the tr-type G domain. The segment at 19 to 26 (GHVDHGKT) is G1. 19-26 (GHVDHGKT) contacts GTP. Residue threonine 26 participates in Mg(2+) binding. The G2 stretch occupies residues 55–59 (GITIS). Positions 76–79 (DCPG) are G3. GTP contacts are provided by residues 76 to 80 (DCPGH) and 131 to 134 (NKCD). The G4 stretch occupies residues 131 to 134 (NKCD). The segment at 169–171 (SAL) is G5.

Belongs to the TRAFAC class translation factor GTPase superfamily. Classic translation factor GTPase family. EF-Tu/EF-1A subfamily. Monomer.

It localises to the cytoplasm. The catalysed reaction is GTP + H2O = GDP + phosphate + H(+). Functionally, GTP hydrolase that promotes the GTP-dependent binding of aminoacyl-tRNA to the A-site of ribosomes during protein biosynthesis. The chain is Elongation factor Tu from Brucella anthropi (strain ATCC 49188 / DSM 6882 / CCUG 24695 / JCM 21032 / LMG 3331 / NBRC 15819 / NCTC 12168 / Alc 37) (Ochrobactrum anthropi).